We begin with the raw amino-acid sequence, 590 residues long: Glutamine--tRNA ligase (590 aa).

Residues 55–65 carry the 'HIGH' region motif; the sequence is PEPNGYLHIGH. ATP is bound by residues 56–58 and 62–68; these read EPN and HIGHAKS. 2 residues coordinate L-glutamine: Asp93 and Tyr238. Residues Thr257 and 292–293 contribute to the ATP site; that span reads RL. Residues 299–303 carry the 'KMSKS' region motif; sequence ITSKR.

It belongs to the class-I aminoacyl-tRNA synthetase family. Monomer.

It is found in the cytoplasm. The catalysed reaction is tRNA(Gln) + L-glutamine + ATP = L-glutaminyl-tRNA(Gln) + AMP + diphosphate. The sequence is that of Glutamine--tRNA ligase from Polynucleobacter asymbioticus (strain DSM 18221 / CIP 109841 / QLW-P1DMWA-1) (Polynucleobacter necessarius subsp. asymbioticus).